A 617-amino-acid chain; its full sequence is Proline--tRNA ligase (617 aa).

This sequence belongs to the class-II aminoacyl-tRNA synthetase family. ProS type 1 subfamily. As to quaternary structure, homodimer.

The protein localises to the cytoplasm. It carries out the reaction tRNA(Pro) + L-proline + ATP = L-prolyl-tRNA(Pro) + AMP + diphosphate. Catalyzes the attachment of proline to tRNA(Pro) in a two-step reaction: proline is first activated by ATP to form Pro-AMP and then transferred to the acceptor end of tRNA(Pro). As ProRS can inadvertently accommodate and process non-cognate amino acids such as alanine and cysteine, to avoid such errors it has two additional distinct editing activities against alanine. One activity is designated as 'pretransfer' editing and involves the tRNA(Pro)-independent hydrolysis of activated Ala-AMP. The other activity is designated 'posttransfer' editing and involves deacylation of mischarged Ala-tRNA(Pro). The misacylated Cys-tRNA(Pro) is not edited by ProRS. The protein is Proline--tRNA ligase of Streptococcus agalactiae serotype III (strain NEM316).